The sequence spans 273 residues: MAIVKCKPTSAGRRHVVKIVNPELHKGKPYAPLLDTKSKTGGRNNLGRITTRHIGGGHKQHYRLVDFKRNKLDIPAVVERLEYDPNRSANIALVLYKDGERRYILAPKGLSVGDEIQAGVNAPIKVGNSLPMRNIPVGSTVHNVELKPGKGGQIARSAGAYVQIIAREGNYVTLRLRSGEMRKVLAECVATIGEVGNSEHMLRVLGKAGANRWRGIRPTVRGTAMNPVDHPHGGGEGRNFGKHPVTPWGVQTKGKKTRHNKRTDKYIVRRRGK.

A disordered region spans residues 221–263 (RGTAMNPVDHPHGGGEGRNFGKHPVTPWGVQTKGKKTRHNKRT). Residues 253–263 (KGKKTRHNKRT) show a composition bias toward basic residues.

It belongs to the universal ribosomal protein uL2 family. In terms of assembly, part of the 50S ribosomal subunit. Forms a bridge to the 30S subunit in the 70S ribosome.

Its function is as follows. One of the primary rRNA binding proteins. Required for association of the 30S and 50S subunits to form the 70S ribosome, for tRNA binding and peptide bond formation. It has been suggested to have peptidyltransferase activity; this is somewhat controversial. Makes several contacts with the 16S rRNA in the 70S ribosome. This chain is Large ribosomal subunit protein uL2, found in Actinobacillus succinogenes (strain ATCC 55618 / DSM 22257 / CCUG 43843 / 130Z).